We begin with the raw amino-acid sequence, 388 residues long: Succinate--CoA ligase [ADP-forming] subunit beta (388 aa).

Residues 9–245 (KELLAKYGLP…KSQENERELK (237 aa)) form the ATP-grasp domain. Residues Lys-46, 53 to 55 (GRG), Glu-100, Tyr-103, and Glu-108 contribute to the ATP site. Residues Asn-200 and Asp-214 each coordinate Mg(2+). Substrate contacts are provided by residues Asn-265 and 322–324 (GIV).

This sequence belongs to the succinate/malate CoA ligase beta subunit family. Heterotetramer of two alpha and two beta subunits. It depends on Mg(2+) as a cofactor.

It carries out the reaction succinate + ATP + CoA = succinyl-CoA + ADP + phosphate. It catalyses the reaction GTP + succinate + CoA = succinyl-CoA + GDP + phosphate. It participates in carbohydrate metabolism; tricarboxylic acid cycle; succinate from succinyl-CoA (ligase route): step 1/1. Its function is as follows. Succinyl-CoA synthetase functions in the citric acid cycle (TCA), coupling the hydrolysis of succinyl-CoA to the synthesis of either ATP or GTP and thus represents the only step of substrate-level phosphorylation in the TCA. The beta subunit provides nucleotide specificity of the enzyme and binds the substrate succinate, while the binding sites for coenzyme A and phosphate are found in the alpha subunit. The protein is Succinate--CoA ligase [ADP-forming] subunit beta of Laribacter hongkongensis (strain HLHK9).